The chain runs to 154 residues: Methylglyoxal synthase (154 aa).

The region spanning 6-154 is the MGS-like domain; that stretch reads SPLPANKAIA…AYMARRAQGN (149 aa). Substrate contacts are provided by residues His19, Lys23, 45 to 48, and 65 to 66; these read TGTT and SG. Asp71 acts as the Proton donor/acceptor in catalysis. Position 98 (His98) interacts with substrate.

Belongs to the methylglyoxal synthase family.

The enzyme catalyses dihydroxyacetone phosphate = methylglyoxal + phosphate. Its function is as follows. Catalyzes the formation of methylglyoxal from dihydroxyacetone phosphate. This is Methylglyoxal synthase from Cellvibrio japonicus (strain Ueda107) (Pseudomonas fluorescens subsp. cellulosa).